Reading from the N-terminus, the 209-residue chain is Guanylate kinase (209 aa).

A Guanylate kinase-like domain is found at Gly-9–Ile-188. Ser-16–Thr-23 is an ATP binding site.

It belongs to the guanylate kinase family.

The protein resides in the cytoplasm. It catalyses the reaction GMP + ATP = GDP + ADP. In terms of biological role, essential for recycling GMP and indirectly, cGMP. The protein is Guanylate kinase of Ehrlichia ruminantium (strain Gardel).